The primary structure comprises 295 residues: MHYRIGTRGSKLALVQSEYVKRRMEEAYPEDTFELVIIKTTGDKVTDKPLAAIGTKGFFVKEIEEALLSGSIDMAVHSMKDMPAECAAGLTFAKAWKREDCRDVLILKTAGSFSELPSGAVIGTGSLRRACQLAMLRPDIQFTAIRGNVDTRINKLMDDSYGLDGIVLAAAGLNRLGRSSEITEYLDPEVVIPAPAQGVLAIETAEVNTELLDKINALSDDNSDREAVAERTFLRLTGGGCHAPVGAHCVTKDNGDLRMVVLFGNDDCSRILRIEVTGTDSEAVGHEAARMLGLE.

Cys-241 carries the S-(dipyrrolylmethanemethyl)cysteine modification.

It belongs to the HMBS family. In terms of assembly, monomer. It depends on dipyrromethane as a cofactor.

The enzyme catalyses 4 porphobilinogen + H2O = hydroxymethylbilane + 4 NH4(+). It participates in porphyrin-containing compound metabolism; protoporphyrin-IX biosynthesis; coproporphyrinogen-III from 5-aminolevulinate: step 2/4. Tetrapolymerization of the monopyrrole PBG into the hydroxymethylbilane pre-uroporphyrinogen in several discrete steps. This is Porphobilinogen deaminase from Lachnospira eligens (strain ATCC 27750 / DSM 3376 / VPI C15-48 / C15-B4) (Eubacterium eligens).